The following is a 457-amino-acid chain: Adenylosuccinate synthetase (457 aa).

Residues 45-51 (GDEGKGK) and 73-75 (GHT) contribute to the GTP site. Asp46 functions as the Proton acceptor in the catalytic mechanism. The Mg(2+) site is built by Asp46 and Gly73. IMP contacts are provided by residues 46 to 49 (DEGK), 71 to 74 (NAGH), Thr163, Arg177, Asn255, Thr270, and Arg334. The Proton donor role is filled by His74. Position 330–336 (330–336 (VTTKRVR)) interacts with substrate. Residues Arg336, 362-364 (KLD), and 444-446 (GVG) each bind GTP.

Belongs to the adenylosuccinate synthetase family. As to quaternary structure, homodimer. Mg(2+) is required as a cofactor.

It is found in the cytoplasm. It catalyses the reaction IMP + L-aspartate + GTP = N(6)-(1,2-dicarboxyethyl)-AMP + GDP + phosphate + 2 H(+). The protein operates within purine metabolism; AMP biosynthesis via de novo pathway; AMP from IMP: step 1/2. Plays an important role in the de novo pathway and in the salvage pathway of purine nucleotide biosynthesis. Catalyzes the first committed step in the biosynthesis of AMP from IMP. The polypeptide is Adenylosuccinate synthetase (Aedes aegypti (Yellowfever mosquito)).